The chain runs to 147 residues: uncharacterized protein (147 aa).

To B.subtilis XkdM.

This is an uncharacterized protein from Bacillus subtilis (strain 168).